A 300-amino-acid chain; its full sequence is tRNA dimethylallyltransferase (300 aa).

11 to 18 (GPTAVGKS) contributes to the ATP binding site. Substrate is bound at residue 13-18 (TAVGKS). The tract at residues 35-38 (DSIQ) is interaction with substrate tRNA.

Belongs to the IPP transferase family. Monomer. The cofactor is Mg(2+).

It catalyses the reaction adenosine(37) in tRNA + dimethylallyl diphosphate = N(6)-dimethylallyladenosine(37) in tRNA + diphosphate. Functionally, catalyzes the transfer of a dimethylallyl group onto the adenine at position 37 in tRNAs that read codons beginning with uridine, leading to the formation of N6-(dimethylallyl)adenosine (i(6)A). In Borrelia recurrentis (strain A1), this protein is tRNA dimethylallyltransferase.